Consider the following 153-residue polypeptide: ORM1-like protein 3 (153 aa).

The interval 1 to 17 is important for ceramide level-sensing; that stretch reads MNVGTAHSEVNPNTRVM. Residues 1 to 21 lie on the Cytoplasmic side of the membrane; the sequence is MNVGTAHSEVNPNTRVMNSRG. The next 2 membrane-spanning stretches (helical) occupy residues 22–42 and 43–63; these read IWLS…SIPF and VSVP…MYIF. At 64–94 the chain is on the cytoplasmic side; sequence LHTVKGTPFETPDQGKARLLTHWEQMDYGVQ. A helical transmembrane segment spans residues 95–117; the sequence is FTASRKFLTITPIVLYFLTSFYT. Over 118 to 121 the chain is Extracellular; sequence KYDQ. A helical membrane pass occupies residues 122 to 142; sequence VHFILNTVSLMTVLIPKLPQL. Pro-137 is subject to Hydroxyproline. Over 143-153 the chain is Cytoplasmic; the sequence is HGVRIFGINKY.

Belongs to the ORM family. As to quaternary structure, ceramide-sensitive subunit of the serine palmitoyltransferase (SPT) complex, which is also composed of SPTLC1, SPTLC2/3 and SPTSSA/B. In terms of processing, when hydroxylated at Pro-137, ubiquitinated via 'Lys-48'-linkage, leading to proteasomal degradation. In endothelial cells, ORMDL3 proteasomal degradation is controlled by the sphingosine 1-phosphate receptor signaling pathway.

The protein resides in the endoplasmic reticulum membrane. Functionally, plays an essential role in the homeostatic regulation of sphingolipid de novo biosynthesis by modulating the activity of the serine palmitoyltransferase (SPT) in response to ceramide levels. When complexed to SPT, the binding of ceramides to its N-terminus stabilizes a conformation that block SPT substrate entry, hence preventing SPT catalytic activity. Through this mechanism, maintains ceramide levels at sufficient concentrations for the production of complex sphingolipids, but which prevents the accumulation of ceramides to levels that trigger apoptosis. The sequence is that of ORM1-like protein 3 (Ormdl3) from Mus musculus (Mouse).